A 1791-amino-acid polypeptide reads, in one-letter code: MMVFQSFILGNLVSLCMKIINSVVVVGLYYGFLTTFSIGPSYLFLLRARVMDEGEEGTEKKVSATTGFIAGQLMMFISIYYAPLHLALGRPHTITVLALPYLLFHFFWNNHKHFFDYGSTTRNEMRNLRIQCVFLNNLIFQLFNHFILPSSMLARLVNIYMFRCNNKMLFVTSSFVGWLIGHILFMKWVGLVLVWIQQNHSIRSNVLIRSNKYKFLVSELRNSMARIFSILLFITCVYYLGRIPSPIFTKKLKGTSETGGTKQDQEVSTEEAPFPSLFSEEREDLDKIDEMEEIRVNGKDKINKDDEFHVRTYYNYKTVSENLDGNKENSNLEFFKIKKKEDRFLWFEKPFVTLVFDYKRWNRPNRYIKNDKIENTVRNEMSQYFFYTCQSDGKERISFTYPPNLSTFFEMIQKKIPSFTREKRPSDQVSTYWSLINEEKKENLKKEFLNRIDALDKEWSGENILEKTTRFCHNETKKEYLPKIYDPFLHGVSRGRIKKLPQFQIITESNRKKNIGGSWINKIHGILLKINYHKFEQTIEKLNRESLSIEKKLSFFSEPQEEKIYSEEEIQIFKFLFDVVITDSNDQTLIKNFMDFHEITKKVPRWSYKLISELEDLEGENEENVTMEPGIRSRKAKRVVVFTDKEPHNEIYTNLKDNQNSDQNDEMALIRYSQQSDFRREIIKGSMRSQRRKTVIWEFFQAKVHSPLFFDRIDKLFYFSFDIWGLKKKILSNLMCKKKKKKKMDKKDEEQSKIEEKRQIEIAETWDSFLFAQIIRGSLLVTQSILRKYIILPLLIIIKNSVRMLLFQFPEWSEDLKDWKREMHVKCTYNGVQLSETEFPKNWLTDGIQIKILFPFYLKPWHKQSSQKARLKKKRDKGEKKDFCFLTVWGMETELPFGSAQKKPSFFEPISKELKKRINKFKTKSFLVLRIFKERATIFIKVTKEIKNRILKNFLFIKGKIKDLSKRNLIPLFGPREIYELNETKKDSIMSNQMIHELSVQKKSMEWTNSSLSENKIQNVIDRIKTIRNQIKEISKEKQNLTNSCNKLRYDSKIIEPSKKIWQTFKRKNTRLIRKSIFFIKFCIEQLSIAIFLGIINIPRITTQLFFESTKTILDKYIYKAEENGEKKKKKKNTIYFISTIKNLISNKKKISYDLCSLSQAYVFYKLSQIQVSNFSKLKAVLEYNICITSLFVKNQIKDFFQEQGIFHYDLKDKTFFNSEVNQWKNWLRSNYQYNLPQIAWARLVTKKWKKKINQDSLVLNPSLTKEDSYEKKKFDNYKKQSVFEADSLLNPKHNLKKNSIYNLFCYKSIHSTEKTFDTSIGIALDNCLVSCFLEKYNIRGIGEIRHRKYLDWRILNFWFTKKVNIEPWVDTKSKKKYINTKVQNYQRIDKITKTGLANQKSLFFDWMGMNEEILNRRITNFEFFFFPEFFLFSSTYKMKPWVIPIKLLLLNFNENINVNKKITRKKKGFIPSNEKKSLRFYNLNKEEKESASQVELESDKENKKNPESALLKQEKNIEENYAESTIKKRKNKKQYKSNTEAELDLFLTRHSRFQLRWNCFFNQKILNNVKVYCLLVRLKNPNEIAISSIERGEMSLDILMIEKNFTFAKLMKKGILIIEPVRLSVQNDGQLIIYRTIGISLVHKNKHKISQRYKKKSYSDKQKIEKSITKYQNKTVNRKKNNYDFFVPENILSPKRRREFRILICFNLKKKNARDRNSRFDKNIQNLTTVLDKKKDLVKNKNNLIKFKSFLWPNFRLEDLACMNRYWFNTTNGNHFSMIRIHMYTRFPLH.

Transmembrane regions (helical) follow at residues 19-39 (IINS…FSIG), 68-88 (FIAG…HLAL), 91-111 (PHTI…WNNH), 133-153 (VFLN…SSML), 176-196 (VGWL…LVWI), and 227-247 (IFSI…PSPI). The interval 1492–1511 (ASQVELESDKENKKNPESAL) is disordered. The segment covering 1498–1511 (ESDKENKKNPESAL) has biased composition (basic and acidic residues).

It belongs to the TIC214 family. Part of the Tic complex.

The protein localises to the plastid. It is found in the chloroplast inner membrane. Involved in protein precursor import into chloroplasts. May be part of an intermediate translocation complex acting as a protein-conducting channel at the inner envelope. This is Protein TIC 214 from Barbarea verna (Land cress).